The following is a 329-amino-acid chain: uncharacterized protein (329 aa).

Residues 1-20 (MGESTTQPAGGAAVDDETRS) are disordered.

This is an uncharacterized protein from Mycobacterium tuberculosis (strain CDC 1551 / Oshkosh).